Here is a 236-residue protein sequence, read N- to C-terminus: 2,3,4,5-tetrahydropyridine-2,6-dicarboxylate N-acetyltransferase (236 aa).

This sequence belongs to the transferase hexapeptide repeat family. DapH subfamily.

It catalyses the reaction (S)-2,3,4,5-tetrahydrodipicolinate + acetyl-CoA + H2O = L-2-acetamido-6-oxoheptanedioate + CoA. The protein operates within amino-acid biosynthesis; L-lysine biosynthesis via DAP pathway; LL-2,6-diaminopimelate from (S)-tetrahydrodipicolinate (acetylase route): step 1/3. Functionally, catalyzes the transfer of an acetyl group from acetyl-CoA to tetrahydrodipicolinate. The chain is 2,3,4,5-tetrahydropyridine-2,6-dicarboxylate N-acetyltransferase from Bacillus pumilus (strain SAFR-032).